A 304-amino-acid chain; its full sequence is Acetylglutamate kinase (304 aa).

Residues 82-83, R104, and N197 each bind substrate; that span reads GG.

It belongs to the acetylglutamate kinase family. ArgB subfamily.

The protein resides in the cytoplasm. The enzyme catalyses N-acetyl-L-glutamate + ATP = N-acetyl-L-glutamyl 5-phosphate + ADP. The protein operates within amino-acid biosynthesis; L-arginine biosynthesis; N(2)-acetyl-L-ornithine from L-glutamate: step 2/4. In terms of biological role, catalyzes the ATP-dependent phosphorylation of N-acetyl-L-glutamate. In Prochlorococcus marinus (strain NATL2A), this protein is Acetylglutamate kinase.